Here is a 108-residue protein sequence, read N- to C-terminus: Nucleoid-associated protein Bphyt_1827 (108 aa).

Residues alanine 87 to phenylalanine 108 form a disordered region. The segment covering proline 99 to phenylalanine 108 has biased composition (pro residues).

Belongs to the YbaB/EbfC family. Homodimer.

It localises to the cytoplasm. It is found in the nucleoid. In terms of biological role, binds to DNA and alters its conformation. May be involved in regulation of gene expression, nucleoid organization and DNA protection. The sequence is that of Nucleoid-associated protein Bphyt_1827 from Paraburkholderia phytofirmans (strain DSM 17436 / LMG 22146 / PsJN) (Burkholderia phytofirmans).